The primary structure comprises 220 residues: UPF0319 protein Asuc_1002 (220 aa).

Positions 1 to 21 are cleaved as a signal peptide; the sequence is MKFRLAAVAAAALLASSASFA.

The protein belongs to the UPF0319 family.

The chain is UPF0319 protein Asuc_1002 from Actinobacillus succinogenes (strain ATCC 55618 / DSM 22257 / CCUG 43843 / 130Z).